A 173-amino-acid chain; its full sequence is Photosystem I assembly protein Ycf3 (173 aa).

TPR repeat units lie at residues 35-68 (AFYY…EKDP), 72-105 (SFIL…NPNL), and 120-153 (GNKL…APYN).

The protein belongs to the Ycf3 family.

The protein resides in the plastid. It localises to the chloroplast thylakoid membrane. Functionally, essential for the assembly of the photosystem I (PSI) complex. May act as a chaperone-like factor to guide the assembly of the PSI subunits. The chain is Photosystem I assembly protein Ycf3 from Cyanidium caldarium (Red alga).